Reading from the N-terminus, the 275-residue chain is Large ribosomal subunit protein uL2cz (275 aa).

2 disordered regions span residues 1–20 and 225–275; these read MAIHLYKTSTPSTRNGAVDS and NPVD…RRSK.

The protein belongs to the universal ribosomal protein uL2 family. As to quaternary structure, part of the 50S ribosomal subunit.

The protein resides in the plastid. Its subcellular location is the chloroplast. The sequence is that of Large ribosomal subunit protein uL2cz (rpl2-A) from Populus alba (White poplar).